We begin with the raw amino-acid sequence, 473 residues long: Ribulose bisphosphate carboxylase large chain (473 aa).

N116 and T166 together coordinate substrate. K168 serves as the catalytic Proton acceptor. Residue K170 participates in substrate binding. The Mg(2+) site is built by K194, D196, and E197. The residue at position 194 (K194) is an N6-carboxylysine. The Proton acceptor role is filled by H287. Substrate is bound by residues R288, H320, and S372.

The protein belongs to the RuBisCO large chain family. Type I subfamily. As to quaternary structure, heterohexadecamer of 8 large chains and 8 small chains. Mg(2+) is required as a cofactor.

It carries out the reaction 2 (2R)-3-phosphoglycerate + 2 H(+) = D-ribulose 1,5-bisphosphate + CO2 + H2O. The catalysed reaction is D-ribulose 1,5-bisphosphate + O2 = 2-phosphoglycolate + (2R)-3-phosphoglycerate + 2 H(+). In terms of biological role, ruBisCO catalyzes two reactions: the carboxylation of D-ribulose 1,5-bisphosphate, the primary event in carbon dioxide fixation, as well as the oxidative fragmentation of the pentose substrate. Both reactions occur simultaneously and in competition at the same active site. The polypeptide is Ribulose bisphosphate carboxylase large chain (Alkalilimnicola ehrlichii (strain ATCC BAA-1101 / DSM 17681 / MLHE-1)).